A 269-amino-acid polypeptide reads, in one-letter code: Glutamate 5-kinase (269 aa).

An ATP-binding site is contributed by Lys14. Positions 54, 141, and 157 each coordinate substrate. Residues 177–178 and 219–225 contribute to the ATP site; these read SD and TGGMVTK.

It belongs to the glutamate 5-kinase family.

The protein resides in the cytoplasm. It catalyses the reaction L-glutamate + ATP = L-glutamyl 5-phosphate + ADP. Its pathway is amino-acid biosynthesis; L-proline biosynthesis; L-glutamate 5-semialdehyde from L-glutamate: step 1/2. In terms of biological role, catalyzes the transfer of a phosphate group to glutamate to form L-glutamate 5-phosphate. The polypeptide is Glutamate 5-kinase (Clostridium perfringens (strain 13 / Type A)).